Here is an 890-residue protein sequence, read N- to C-terminus: DNA mismatch repair protein MutS (890 aa).

Residue glycine 634–serine 641 coordinates ATP.

It belongs to the DNA mismatch repair MutS family.

Functionally, this protein is involved in the repair of mismatches in DNA. It is possible that it carries out the mismatch recognition step. This protein has a weak ATPase activity. This Burkholderia pseudomallei (strain K96243) protein is DNA mismatch repair protein MutS.